An 890-amino-acid polypeptide reads, in one-letter code: ATP-dependent DNA helicase DDX11 (890 aa).

Residues 4–424 (KSGRFPFPFQ…KNLMYIKQIL (421 aa)) form the Helicase ATP-binding domain. Position 39-46 (39-46 (SPTGTGKS)) interacts with ATP. Basic and acidic residues predominate over residues 71 to 85 (LLEGQKDSDVVKEKN). 2 disordered regions span residues 71–95 (LLEGQKDSDVVKEKNSNSGPPEPDW) and 176–199 (EYESDDEATPKSRLCDDDNDDDDD). [4Fe-4S] cluster-binding residues include C246, C264, C294, and C329. The DEAH box motif lies at 372–375 (DEAH).

Belongs to the DEAD box helicase family. DEAH subfamily. DDX11/CHL1 sub-subfamily. The cofactor is [4Fe-4S] cluster.

Its subcellular location is the nucleus. It localises to the nucleolus. It is found in the cytoplasm. The protein localises to the cytoskeleton. The protein resides in the spindle pole. Its subcellular location is the midbody. It localises to the microtubule organizing center. It is found in the centrosome. The catalysed reaction is Couples ATP hydrolysis with the unwinding of duplex DNA at the replication fork by translocating in the 5'-3' direction. This creates two antiparallel DNA single strands (ssDNA). The leading ssDNA polymer is the template for DNA polymerase III holoenzyme which synthesizes a continuous strand.. The enzyme catalyses ATP + H2O = ADP + phosphate + H(+). Its function is as follows. DNA-dependent ATPase and ATP-dependent DNA helicase that participates in various functions in genomic stability, including DNA replication, DNA repair and heterochromatin organization as well as in ribosomal RNA synthesis. Plays a role in DNA double-strand break (DSB) repair at the DNA replication fork during DNA replication recovery from DNA damage. Plays a role in the regulation of sister chromatid cohesion and mitotic chromosome segregation. Stimulates 5'-single-stranded DNA flap endonuclease activity of FEN1 in an ATP- and helicase-independent manner. Also plays a role in heterochromatin organization. Involved in rRNA transcription activation through binding to active hypomethylated rDNA gene loci by recruiting UBTF and the RNA polymerase Pol I transcriptional machinery. Plays a role in embryonic development. Associates with chromatin at DNA replication fork regions. Binds to single- and double-stranded DNAs. The sequence is that of ATP-dependent DNA helicase DDX11 from Danio rerio (Zebrafish).